A 232-amino-acid polypeptide reads, in one-letter code: Zinc finger protein RTS2 (232 aa).

The C2H2-type zinc-finger motif lies at 24-48 (YYCQICQRQCKDANGFQSHNKSPSH). Disordered regions lie at residues 180-199 (AKRQ…ISGD) and 211-232 (GNGR…IKFR).

It localises to the nucleus. The protein is Zinc finger protein RTS2 (RTS2) of Saccharomyces cerevisiae (strain ATCC 204508 / S288c) (Baker's yeast).